We begin with the raw amino-acid sequence, 481 residues long: Heat stress transcription factor A-1b (481 aa).

Over residues 1 to 16 the composition is skewed to low complexity; the sequence is MESVPESVPSPNSNTP. Positions 1–23 are disordered; the sequence is MESVPESVPSPNSNTPSIPPPVN. Residues 25–119 mediate DNA binding; sequence VPPFLSKTYD…LLKSIVRRKP (95 aa). Positions 138–204 are hydrophobic repeat HR-A/B; that stretch reads ACVEVGKFGI…QMMSFLAKAV (67 aa). Positions 213-227 are enriched in polar residues; the sequence is LVQQNNNDGNRQIPG. Residues 213 to 244 form a disordered region; the sequence is LVQQNNNDGNRQIPGSNKKRRLPVDEQENRGD. Residues 229-233 carry the Nuclear localization signal motif; the sequence is NKKRR. The span at 234 to 243 shows a compositional bias: basic and acidic residues; the sequence is LPVDEQENRG. An AHA motif is present at residues 418–427; that stretch reads DPFWEQFFSV. The Nuclear export signal motif lies at 467 to 474; the sequence is LTEQMGLL.

This sequence belongs to the HSF family. Class A subfamily. In terms of assembly, homotrimer. Binds to HSBP. Post-translationally, exhibits temperature-dependent phosphorylation.

It is found in the cytoplasm. Its subcellular location is the nucleus. Transcriptional activator that specifically binds DNA sequence 5'-AGAAnnTTCT-3' known as heat shock promoter elements (HSE). The chain is Heat stress transcription factor A-1b (HSFA1B) from Arabidopsis thaliana (Mouse-ear cress).